Consider the following 323-residue polypeptide: Transcription factor MYB108 (323 aa).

2 consecutive HTH myb-type domains span residues 16–68 and 69–123; these read EMDL…LNYL and RPDV…QKHA. 2 consecutive DNA-binding regions (H-T-H motif) follow at residues 44-68 and 96-119; these read WNSLSRCAGLQRTGKSCRLRWLNYL and WSKIAQYLPGRTDNEIKNYWRTRV.

Interacts with BOI, but not with BRG1. Post-translationally, ubiquitinated in vitro by BOI. In terms of tissue distribution, expressed specifically in flowers. Restricted to anthers in maturing flowers. Strongest expression in the vascular and connective tissue where the anther attaches to the filament. Not detected in pollen.

Its subcellular location is the nucleus. Its function is as follows. Transcription factor contributing to the regulation of stamen maturation and male fertility in response to jasmonate signaling. Required for correct timing of anther dehiscence. Acts as a negative regulator of abscisic acid-induced cell death. Not involved in the regulation of BOI. Regulated by MYB21 and at a lower level by MYB24. Negatively regulated by the proteasome in an SCF(COI1) E3 ubiquitin-protein ligase complex-dependent manner. This chain is Transcription factor MYB108 (MYB108), found in Arabidopsis thaliana (Mouse-ear cress).